A 248-amino-acid polypeptide reads, in one-letter code: Carboxy-S-adenosyl-L-methionine synthase (248 aa).

Residues Tyr40, 65–67 (GCS), 95–96 (DN), 123–124 (DI), Asn138, and Arg205 contribute to the S-adenosyl-L-methionine site.

Belongs to the class I-like SAM-binding methyltransferase superfamily. Cx-SAM synthase family. In terms of assembly, homodimer.

It carries out the reaction prephenate + S-adenosyl-L-methionine = carboxy-S-adenosyl-L-methionine + 3-phenylpyruvate + H2O. In terms of biological role, catalyzes the conversion of S-adenosyl-L-methionine (SAM) to carboxy-S-adenosyl-L-methionine (Cx-SAM). This is Carboxy-S-adenosyl-L-methionine synthase from Hahella chejuensis (strain KCTC 2396).